The sequence spans 143 residues: Transcriptional regulator MraZ (143 aa).

SpoVT-AbrB domains are found at residues 5–47 and 76–119; these read EYSH…PMPV and AMEA…SDEN.

It belongs to the MraZ family. In terms of assembly, forms oligomers.

It is found in the cytoplasm. It localises to the nucleoid. In Leuconostoc citreum (strain KM20), this protein is Transcriptional regulator MraZ.